Reading from the N-terminus, the 232-residue chain is Ubiquinone biosynthesis O-methyltransferase (232 aa).

S-adenosyl-L-methionine contacts are provided by Arg36, Gly55, Asp76, and Leu120.

This sequence belongs to the methyltransferase superfamily. UbiG/COQ3 family.

The catalysed reaction is a 3-demethylubiquinol + S-adenosyl-L-methionine = a ubiquinol + S-adenosyl-L-homocysteine + H(+). The enzyme catalyses a 3-(all-trans-polyprenyl)benzene-1,2-diol + S-adenosyl-L-methionine = a 2-methoxy-6-(all-trans-polyprenyl)phenol + S-adenosyl-L-homocysteine + H(+). The protein operates within cofactor biosynthesis; ubiquinone biosynthesis. O-methyltransferase that catalyzes the 2 O-methylation steps in the ubiquinone biosynthetic pathway. The sequence is that of Ubiquinone biosynthesis O-methyltransferase from Pseudomonas putida (strain GB-1).